We begin with the raw amino-acid sequence, 643 residues long: 1-deoxy-D-xylulose-5-phosphate synthase (643 aa).

Thiamine diphosphate contacts are provided by residues His-78 and 119 to 121 (AHS). Asp-150 contacts Mg(2+). Thiamine diphosphate-binding positions include 151–152 (GA), Asn-179, Tyr-288, and Glu-370. Mg(2+) is bound at residue Asn-179.

This sequence belongs to the transketolase family. DXPS subfamily. As to quaternary structure, homodimer. Mg(2+) serves as cofactor. Requires thiamine diphosphate as cofactor.

The enzyme catalyses D-glyceraldehyde 3-phosphate + pyruvate + H(+) = 1-deoxy-D-xylulose 5-phosphate + CO2. Its pathway is metabolic intermediate biosynthesis; 1-deoxy-D-xylulose 5-phosphate biosynthesis; 1-deoxy-D-xylulose 5-phosphate from D-glyceraldehyde 3-phosphate and pyruvate: step 1/1. Catalyzes the acyloin condensation reaction between C atoms 2 and 3 of pyruvate and glyceraldehyde 3-phosphate to yield 1-deoxy-D-xylulose-5-phosphate (DXP). This is 1-deoxy-D-xylulose-5-phosphate synthase from Xanthobacter autotrophicus (strain ATCC BAA-1158 / Py2).